We begin with the raw amino-acid sequence, 359 residues long: MKPSIYSLTRDELIAWAVERGQKQFRATQIWDWLYKKRVQSFEEMTNISKDFVSILNDSFCVNPLKQRVVQESADGTVKYLFELPDGMLIETVLMRQHYGHSVCVTTQVGCNIGCTFCASGLIKKQRDLNSGEITAQIMLVQKYFDDRKQGERVSHVVVMGIGEPFDNYKNVMCFLRVINDDNGLAIGARHITVSTSGLAHKIRDFANEGVQVNLAVSLHAPNNDLRSRIMRVNRSFPLEKLFSAIEYYIEKTNRRVTFEYIMLNEVNDSIKQAQELADLTKTIRKLSYVNLIPYNPVSEHDQYSRSPKERVLAFYDVLKKNGVNCVVRQEHGTDIDAACGQLRSKTMKKDREKVTATK.

E91 (proton acceptor) is an active-site residue. The 233-residue stretch at 97-329 (QHYGHSVCVT…KKNGVNCVVR (233 aa)) folds into the Radical SAM core domain. C104 and C340 are oxidised to a cystine. Positions 111, 115, and 118 each coordinate [4Fe-4S] cluster. S-adenosyl-L-methionine-binding positions include 163 to 164 (GE), S195, 218 to 220 (SLH), and N296. C340 functions as the S-methylcysteine intermediate in the catalytic mechanism.

It belongs to the radical SAM superfamily. RlmN family. It depends on [4Fe-4S] cluster as a cofactor.

It localises to the cytoplasm. It carries out the reaction adenosine(2503) in 23S rRNA + 2 reduced [2Fe-2S]-[ferredoxin] + 2 S-adenosyl-L-methionine = 2-methyladenosine(2503) in 23S rRNA + 5'-deoxyadenosine + L-methionine + 2 oxidized [2Fe-2S]-[ferredoxin] + S-adenosyl-L-homocysteine. The enzyme catalyses adenosine(37) in tRNA + 2 reduced [2Fe-2S]-[ferredoxin] + 2 S-adenosyl-L-methionine = 2-methyladenosine(37) in tRNA + 5'-deoxyadenosine + L-methionine + 2 oxidized [2Fe-2S]-[ferredoxin] + S-adenosyl-L-homocysteine. In terms of biological role, specifically methylates position 2 of adenine 2503 in 23S rRNA and position 2 of adenine 37 in tRNAs. The chain is Probable dual-specificity RNA methyltransferase RlmN from Streptococcus pyogenes serotype M5 (strain Manfredo).